The sequence spans 819 residues: Pentatricopeptide repeat-containing protein At1g52620 (819 aa).

PPR repeat units lie at residues N98–L132, T133–L163, D169–V203, D204–P238, N239–P273, T274–V308, S309–P343, D344–P378, N379–P413, D414–P448, D449–P483, D484–V518, D519–P553, D554–P588, N589–P623, N624–P659, H709–P743, and D744–V779.

Belongs to the PPR family. P subfamily.

In Arabidopsis thaliana (Mouse-ear cress), this protein is Pentatricopeptide repeat-containing protein At1g52620.